Consider the following 162-residue polypeptide: AP-1 complex subunit sigma-1 (162 aa).

This sequence belongs to the adaptor complexes small subunit family. In terms of assembly, adaptor protein complex 1 (AP-1) is a heterotetramer composed of two large adaptins (gamma-type subunit apl4 and beta-type subunit apl2), a medium adaptin (mu-type subunit apm1) and a small adaptin (sigma-type subunit aps1). AP-1 interacts with clathrin.

It is found in the cytoplasm. Its subcellular location is the nucleus. It localises to the cytoplasmic vesicle. The protein resides in the clathrin-coated vesicle membrane. The protein localises to the endosome. It is found in the golgi apparatus. Its function is as follows. Component of the AP-1 complex which links clathrin to receptors in coated vesicles. Clathrin-associated protein complexes are believed to interact with the cytoplasmic tails of membrane proteins, leading to their selection and concentration. The chain is AP-1 complex subunit sigma-1 (vas2) from Schizosaccharomyces pombe (strain 972 / ATCC 24843) (Fission yeast).